The following is a 666-amino-acid chain: MTSQKRFIFEVEAAKEATDGNPSVGPVYRSTFAQNGFPNPIDGIQSCWDIFRTAVEKYPNNRMLGRREISNGKAGKYVWKTYKEVYDIVIKLGNSLRSCGIKEGEKCGIYGINCCEWIISMEACNAHGLYCVPLYDTLGAGAVEFIISHAEVSIAFVEEKKIPELFKTCPNSTKYMKTVVSFGGVKPEQKEEAEKLGLVIHSWDEFLKLGEGKQYELPIKKPSDICTIMYTSGTTGDPKGVMISNESIVTITTGVMHFLGNVNASLSEKDVYISYLPLAHVFDRAIEECIIQVGGSIGFWRGDVKLLIEDLGELKPSIFCAVPRVLDRVYTGLQQKLSGGGFFKKKVFDVAFSYKFGNMKKGQSHVAASPFCDKLVFNKVKQGLGGNVRIILSGAAPLASHIESFLRVVACCNVLQGYGLTESCAGTFATFPDELDMLGTVGPPVPNVDIRLESVPEMNYDALGSTPRGEICIRGKTLFSGYYKREDLTKEVFIDGWLHTGDVGEWQPNGSMKIIDRKKNIFKLAQGEYVAVENLENVYSQVEVIESIWVYGNSFESFLVAIANPAQQTLERWAVENGVNGDFNSICQNAKAKAFILGELVKTAKENKLKGFEIIKDVHLEPVAFDMERDLLTPTYKKKRPQLLKYYQNVIHEMYKTTKESLASGQ.

Residue isoleucine 228–lysine 239 coordinates ATP. The interval aspartate 495–lysine 519 is fatty acid-binding.

This sequence belongs to the ATP-dependent AMP-binding enzyme family. Requires Mg(2+) as cofactor.

It carries out the reaction a long-chain fatty acid + ATP + CoA = a long-chain fatty acyl-CoA + AMP + diphosphate. It participates in lipid metabolism; fatty acid metabolism. Activation of long-chain fatty acids for both synthesis of cellular lipids, and degradation via beta-oxidation. Preferentially uses palmitate, palmitoleate, oleate and linoleate. This is Long chain acyl-CoA synthetase 5 (LACS5) from Arabidopsis thaliana (Mouse-ear cress).